Consider the following 397-residue polypeptide: Stearoyl-[acyl-carrier-protein] 9-desaturase, chloroplastic (397 aa).

A chloroplast-targeting transit peptide spans 1–33 (MALNFNAIASKSQKLPCFALPPKATLRSPKFSM). E138, E176, H179, E229, E262, and H265 together coordinate Fe cation.

The protein belongs to the fatty acid desaturase type 2 family. Homodimer. Fe(2+) is required as a cofactor.

It is found in the plastid. The protein localises to the chloroplast. It catalyses the reaction octadecanoyl-[ACP] + 2 reduced [2Fe-2S]-[ferredoxin] + O2 + 2 H(+) = (9Z)-octadecenoyl-[ACP] + 2 oxidized [2Fe-2S]-[ferredoxin] + 2 H2O. Its pathway is lipid metabolism; fatty acid metabolism. Its function is as follows. Converts stearoyl-ACP to oleoyl-ACP by introduction of a cis double bond between carbons 9 and 10 of the acyl chain. This chain is Stearoyl-[acyl-carrier-protein] 9-desaturase, chloroplastic, found in Gossypium hirsutum (Upland cotton).